The primary structure comprises 196 residues: Nucleoside triphosphate pyrophosphatase (196 aa).

D73 (proton acceptor) is an active-site residue.

The protein belongs to the Maf family. Requires a divalent metal cation as cofactor.

It is found in the cytoplasm. The catalysed reaction is a ribonucleoside 5'-triphosphate + H2O = a ribonucleoside 5'-phosphate + diphosphate + H(+). It carries out the reaction a 2'-deoxyribonucleoside 5'-triphosphate + H2O = a 2'-deoxyribonucleoside 5'-phosphate + diphosphate + H(+). Functionally, nucleoside triphosphate pyrophosphatase. May have a dual role in cell division arrest and in preventing the incorporation of modified nucleotides into cellular nucleic acids. In Anaplasma marginale (strain St. Maries), this protein is Nucleoside triphosphate pyrophosphatase.